Here is an 89-residue protein sequence, read N- to C-terminus: Small ribosomal subunit protein uS15 (89 aa).

It belongs to the universal ribosomal protein uS15 family. Part of the 30S ribosomal subunit. Forms a bridge to the 50S subunit in the 70S ribosome, contacting the 23S rRNA.

Its function is as follows. One of the primary rRNA binding proteins, it binds directly to 16S rRNA where it helps nucleate assembly of the platform of the 30S subunit by binding and bridging several RNA helices of the 16S rRNA. In terms of biological role, forms an intersubunit bridge (bridge B4) with the 23S rRNA of the 50S subunit in the ribosome. This is Small ribosomal subunit protein uS15 from Mycobacterium leprae (strain Br4923).